The primary structure comprises 202 residues: Peptidyl-tRNA hydrolase (202 aa).

Residue Tyr-22 participates in tRNA binding. The Proton acceptor role is filled by His-27. TRNA contacts are provided by Phe-69, Asn-71, and Asn-117.

The protein belongs to the PTH family. Monomer.

The protein resides in the cytoplasm. It catalyses the reaction an N-acyl-L-alpha-aminoacyl-tRNA + H2O = an N-acyl-L-amino acid + a tRNA + H(+). Its function is as follows. Hydrolyzes ribosome-free peptidyl-tRNAs (with 1 or more amino acids incorporated), which drop off the ribosome during protein synthesis, or as a result of ribosome stalling. In terms of biological role, catalyzes the release of premature peptidyl moieties from peptidyl-tRNA molecules trapped in stalled 50S ribosomal subunits, and thus maintains levels of free tRNAs and 50S ribosomes. The chain is Peptidyl-tRNA hydrolase from Thiobacillus denitrificans (strain ATCC 25259 / T1).